Reading from the N-terminus, the 1015-residue chain is Condensin complex subunit 3 (1015 aa).

5 HEAT repeats span residues 94 to 131 (GLLN…SMPE), 138 to 173 (DVFD…QDPK), 174 to 212 (DDEC…TLPK), 238 to 275 (MRAM…GWLR), and 276 to 313 (FSEG…LSEL). Serine 390 carries the phosphoserine modification. 3 HEAT repeats span residues 399–436 (EFIG…LPTI), 439–478 (SLVS…TVGV), and 617–654 (DFAR…TFGI). Position 674 is a phosphoserine (serine 674). HEAT repeat units lie at residues 687 to 724 (ATAK…SGLL) and 865 to 907 (KDLL…QAEA). Threonine 931 carries the post-translational modification Phosphothreonine. Positions 941–950 (ASKSTQLKTN) are enriched in polar residues. Residues 941–994 (ASKSTQLKTNRGQRKVTVSARTNRRCQTAEADSESDHEVPEPESEMKMRLPRRA) form a disordered region. Phosphoserine is present on residues serine 973, serine 975, serine 1002, and serine 1015. Positions 974 to 988 (ESDHEVPEPESEMKM) are enriched in basic and acidic residues.

Belongs to the CND3 (condensin subunit 3) family. Component of the condensin complex, which contains the SMC2 and SMC4 heterodimer, and three non SMC subunits that probably regulate the complex: NCAPH/BRRN1, NCAPD2/CAPD2 and NCAPG. Post-translationally, phosphorylated by CDK1. Its phosphorylation, as well as that of NCAPD2 and NCAPH subunits, activates the condensin complex and is required for chromosome condensation. As to expression, highly expressed in testis.

It localises to the nucleus. It is found in the cytoplasm. The protein localises to the chromosome. Functionally, regulatory subunit of the condensin complex, a complex required for conversion of interphase chromatin into mitotic-like condense chromosomes. The condensin complex probably introduces positive supercoils into relaxed DNA in the presence of type I topoisomerases and converts nicked DNA into positive knotted forms in the presence of type II topoisomerases. This Homo sapiens (Human) protein is Condensin complex subunit 3 (NCAPG).